The following is a 669-amino-acid chain: Carnitine O-palmitoyltransferase 2, mitochondrial (669 aa).

The N-terminal 36 residues, 1–36 (MMAGLLSTQCNSTLSKLKHLSNNPALSVLTSTHRKY), are a transit peptide targeting the mitochondrion. Residues 37 to 190 (SSKDGAGSEY…GLLEPEVFHL (154 aa)) lie on the Mitochondrial matrix side of the membrane. Positions 191-220 (NPAKSDTDSFKKLIRWVPPSISWFGAYMVN) form an intramembrane region, note=Mitochondrial inner membrane. The Mitochondrial matrix segment spans residues 221–669 (AYPLDMSQYF…FTVLDGNPIH (449 aa)). His384 (proton acceptor) is an active-site residue. 464–476 (GKEQLKKKKLSPD) serves as a coordination point for CoA. Tyr498, Ser500, and Thr511 together coordinate (R)-carnitine.

The protein belongs to the carnitine/choline acetyltransferase family.

The protein localises to the mitochondrion inner membrane. It catalyses the reaction (R)-carnitine + hexadecanoyl-CoA = O-hexadecanoyl-(R)-carnitine + CoA. It carries out the reaction octanoyl-CoA + (R)-carnitine = O-octanoyl-(R)-carnitine + CoA. The catalysed reaction is decanoyl-CoA + (R)-carnitine = O-decanoyl-(R)-carnitine + CoA. The enzyme catalyses dodecanoyl-CoA + (R)-carnitine = O-dodecanoyl-R-carnitine + CoA. It catalyses the reaction tetradecanoyl-CoA + (R)-carnitine = O-tetradecanoyl-(R)-carnitine + CoA. It carries out the reaction (R)-carnitine + octadecanoyl-CoA = O-octadecanoyl-(R)-carnitine + CoA. The catalysed reaction is eicosanoyl-CoA + (R)-carnitine = O-eicosanoyl-(R)-carnitine + CoA. The enzyme catalyses (9Z)-tetradecenoyl-CoA + (R)-carnitine = O-(9Z)-tetradecenoyl-(R)-carnitine + CoA. It catalyses the reaction (5Z)-tetradecenoyl-CoA + (R)-carnitine = O-(5Z)-tetradecenoyl-(R)-carnitine + CoA. It carries out the reaction (R)-carnitine + (9Z)-octadecenoyl-CoA = O-(9Z)-octadecenoyl-(R)-carnitine + CoA. The catalysed reaction is 4,8-dimethylnonanoyl-CoA + (R)-carnitine = O-4,8-dimethylnonanoyl-(R)-carnitine + CoA. Its pathway is lipid metabolism; fatty acid beta-oxidation. Its function is as follows. Involved in the intramitochondrial synthesis of acylcarnitines from accumulated acyl-CoA metabolites. Reconverts acylcarnitines back into the respective acyl-CoA esters that can then undergo beta-oxidation, an essential step for the mitochondrial uptake of long-chain fatty acids and their subsequent beta-oxidation in the mitochondrion. Active with medium (C8-C12) and long-chain (C14-C18) acyl-CoA esters. The chain is Carnitine O-palmitoyltransferase 2, mitochondrial (cpt2) from Danio rerio (Zebrafish).